We begin with the raw amino-acid sequence, 331 residues long: Ketol-acid reductoisomerase (NADP(+)) (331 aa).

In terms of domain architecture, KARI N-terminal Rossmann spans Ala2–Thr182. NADP(+)-binding positions include Tyr25 to Gln28, Ser51, Ser53, and Asp83 to Gln86. Residue His108 is part of the active site. Gly134 serves as a coordination point for NADP(+). The KARI C-terminal knotted domain occupies Ser183–Leu328. 4 residues coordinate Mg(2+): Asp191, Glu195, Glu227, and Glu231. Ser252 is a binding site for substrate.

It belongs to the ketol-acid reductoisomerase family. The cofactor is Mg(2+).

The enzyme catalyses (2R)-2,3-dihydroxy-3-methylbutanoate + NADP(+) = (2S)-2-acetolactate + NADPH + H(+). The catalysed reaction is (2R,3R)-2,3-dihydroxy-3-methylpentanoate + NADP(+) = (S)-2-ethyl-2-hydroxy-3-oxobutanoate + NADPH + H(+). It participates in amino-acid biosynthesis; L-isoleucine biosynthesis; L-isoleucine from 2-oxobutanoate: step 2/4. It functions in the pathway amino-acid biosynthesis; L-valine biosynthesis; L-valine from pyruvate: step 2/4. Its function is as follows. Involved in the biosynthesis of branched-chain amino acids (BCAA). Catalyzes an alkyl-migration followed by a ketol-acid reduction of (S)-2-acetolactate (S2AL) to yield (R)-2,3-dihydroxy-isovalerate. In the isomerase reaction, S2AL is rearranged via a Mg-dependent methyl migration to produce 3-hydroxy-3-methyl-2-ketobutyrate (HMKB). In the reductase reaction, this 2-ketoacid undergoes a metal-dependent reduction by NADPH to yield (R)-2,3-dihydroxy-isovalerate. This is Ketol-acid reductoisomerase (NADP(+)) from Crocosphaera subtropica (strain ATCC 51142 / BH68) (Cyanothece sp. (strain ATCC 51142)).